A 199-amino-acid chain; its full sequence is Tropomyosin-1 (199 aa).

A coiled-coil region spans residues methionine 1–leucine 199. Residues lysine 39 and lysine 59 each participate in a glycyl lysine isopeptide (Lys-Gly) (interchain with G-Cter in ubiquitin) cross-link. 2 disordered regions span residues lysine 59–isoleucine 81 and leucine 102–leucine 147. Basic and acidic residues-rich tracts occupy residues lysine 68 to glutamine 80 and leucine 102 to histidine 114. Positions leucine 115 to asparagine 126 are enriched in polar residues. The segment covering serine 136 to leucine 147 has biased composition (basic and acidic residues). A Glycyl lysine isopeptide (Lys-Gly) (interchain with G-Cter in ubiquitin) cross-link involves residue lysine 187. At serine 195 the chain carries Phosphoserine.

Homodimer.

The protein resides in the cytoplasm. The protein localises to the cytoskeleton. This Saccharomyces cerevisiae (strain ATCC 204508 / S288c) (Baker's yeast) protein is Tropomyosin-1 (TPM1).